The sequence spans 336 residues: Probable GTPase MT1543 (336 aa).

Residues 67 to 75 (GVPGVGKST), D209, and 245 to 247 (SAV) contribute to the GTP site.

The protein belongs to the SIMIBI class G3E GTPase family. ArgK/MeaB subfamily. As to quaternary structure, homodimer.

Its function is as follows. Probable GTPase. May also bind and hydrolyze ATP. May function as chaperone. The chain is Probable GTPase MT1543 from Mycobacterium tuberculosis (strain CDC 1551 / Oshkosh).